Consider the following 277-residue polypeptide: PTS system sorbose-specific EIIC component (277 aa).

5 helical membrane-spanning segments follow: residues 1-21 (MAISTIQIILIFIWSSVVGMG), 92-112 (IQKGIAIALPVAAAGQVLTVL), 133-153 (FTAIIWLHFTALIVQALRVSI), 177-197 (VITGGLAVAGGFIVVVGYAMI), and 219-239 (YLKLSLLAWGAVGLIFAIVYV). One can recognise a PTS EIIC type-4 domain in the interval 3–237 (ISTIQIILIF…GAVGLIFAIV (235 aa)).

The protein localises to the cell membrane. Its function is as follows. The phosphoenolpyruvate-dependent sugar phosphotransferase system (PTS), a major carbohydrate active transport system, catalyzes the phosphorylation of incoming sugar substrates concomitant with their translocation across the cell membrane. The enzyme II SorABCD PTS system is involved in L-sorbose transport. The protein is PTS system sorbose-specific EIIC component of Lacticaseibacillus casei (Lactobacillus casei).